The following is a 292-amino-acid chain: ATP synthase gamma chain (292 aa).

The protein belongs to the ATPase gamma chain family. F-type ATPases have 2 components, CF(1) - the catalytic core - and CF(0) - the membrane proton channel. CF(1) has five subunits: alpha(3), beta(3), gamma(1), delta(1), epsilon(1). CF(0) has three main subunits: a, b and c.

Its subcellular location is the cell inner membrane. Functionally, produces ATP from ADP in the presence of a proton gradient across the membrane. The gamma chain is believed to be important in regulating ATPase activity and the flow of protons through the CF(0) complex. The protein is ATP synthase gamma chain of Brucella abortus (strain S19).